We begin with the raw amino-acid sequence, 470 residues long: Iron-sulfur cluster assembly SufBD family protein ABCI9 (470 aa).

Belongs to the iron-sulfur cluster assembly SufBD family.

This is Iron-sulfur cluster assembly SufBD family protein ABCI9 (ABCI9) from Arabidopsis thaliana (Mouse-ear cress).